The sequence spans 339 residues: Alcohol dehydrogenase notN (339 aa).

The Zn(2+) site is built by cysteine 44, histidine 65, glutamate 66, cysteine 99, cysteine 102, cysteine 110, and cysteine 152. Histidine 65 is a binding site for an alcohol. NAD(+) is bound by residues glycine 176–glycine 181, valine 196–glycine 201, lysine 204, leucine 263–phenylalanine 265, proline 287–glycine 289, and glutamate 295–alanine 297.

This sequence belongs to the zinc-containing alcohol dehydrogenase family. It depends on Zn(2+) as a cofactor.

It catalyses the reaction a primary alcohol + NAD(+) = an aldehyde + NADH + H(+). It carries out the reaction a secondary alcohol + NAD(+) = a ketone + NADH + H(+). Its function is as follows. Alcohol dehydrogenase; part of the gene cluster that mediates the biosynthesis of notoamide, a fungal indole alkaloid that belongs to a family of natural products containing a characteristic bicyclo[2.2.2]diazaoctane core. The first step of notoamide biosynthesis involves coupling of L-proline and L-tryptophan by the bimodular NRPS notE, to produce cyclo-L-tryptophan-L-proline called brevianamide F. The reverse prenyltransferase notF then acts as a deoxybrevianamide E synthase and converts brevianamide F to deoxybrevianamide E via reverse prenylation at C-2 of the indole ring leading to the bicyclo[2.2.2]diazaoctane core. Deoxybrevianamide E is further hydroxylated at C-6 of the indole ring, likely catalyzed by the cytochrome P450 monooxygenase notG, to yield 6-hydroxy-deoxybrevianamide E. 6-hydroxy-deoxybrevianamide E is a specific substrate of the prenyltransferase notC for normal prenylation at C-7 to produce 6-hydroxy-7-prenyl-deoxybrevianamide, also called notoamide S. As the proposed pivotal branching point in notoamide biosynthesis, notoamide S can be diverted to notoamide E through an oxidative pyran ring closure putatively catalyzed by either notH cytochrome P450 monooxygenase or the notD FAD-linked oxidoreductase. This step would be followed by an indole 2,3-epoxidation-initiated pinacol-like rearrangement catalyzed by the notB FAD-dependent monooxygenase leading to the formation of notoamide C and notoamide D. On the other hand notoamide S is converted to notoamide T by notH (or notD), a bifunctional oxidase that also functions as the intramolecular Diels-Alderase responsible for generation of (+)-notoamide T. To generate antipodal (-)-notoaminide T, notH' (or notD') in Aspergillus versicolor is expected to catalyze a Diels-Alder reaction leading to the opposite stereochemistry. The remaining oxidoreductase notD (or notH) likely catalyzes the oxidative pyran ring formation to yield (+)-stephacidin A. The FAD-dependent monooxygenase notI is highly similar to notB and is predicted to catalyze a similar conversion from (+)-stephacidin A to (-)-notoamide B via the 2,3-epoxidation of (+)-stephacidin A followed by a pinacol-type rearrangement. Finally, it remains unclear which enzyme could be responsible for the final hydroxylation steps leading to notoamide A and sclerotiamide. The function of notN in the notoamide biosynthesis has not been determined yet. In Aspergillus sp. (strain MF297-2), this protein is Alcohol dehydrogenase notN.